The chain runs to 148 residues: Lysozyme C (148 aa).

A signal peptide spans 1–18 (MKALIILGLVLLSVTVQG). The 130-residue stretch at 19–148 (KIFERCELAR…VSQYVEGCGV (130 aa)) folds into the C-type lysozyme domain. 4 cysteine pairs are disulfide-bonded: Cys24-Cys146, Cys48-Cys134, Cys83-Cys99, and Cys95-Cys113. Active-site residues include Glu53 and Asp71.

Belongs to the glycosyl hydrolase 22 family. Monomer.

It carries out the reaction Hydrolysis of (1-&gt;4)-beta-linkages between N-acetylmuramic acid and N-acetyl-D-glucosamine residues in a peptidoglycan and between N-acetyl-D-glucosamine residues in chitodextrins.. Functionally, lysozymes have primarily a bacteriolytic function; those in tissues and body fluids are associated with the monocyte-macrophage system and enhance the activity of immunoagents. The polypeptide is Lysozyme C (LYZ) (Colobus angolensis (Angolan colobus)).